Consider the following 369-residue polypeptide: MSSTLYTSPRLDGFRMPAEHEPQEQVWMAWPTREDNWREKGKHAQAEFVAVATAIAQSTKVTFIVDAKHYEQARLALPDQIRVIEIPSDDCWMRDIGATYVVNDQGERRANSWQFNAWGGELDGLYDSWEQDNAVAEKMAAVTGDYVYHAPLILEGGSIHVDGEGTLYTTEECLLHPSRNPHLSKEDIEDLLKVYLNVEKIIWLKDGLYNDETNGHVDNIMHVIRPGVVALTDCEDSNDPQYAISKAAIKVLSQAIDAKGRTLEIIKLPMPGPLFVSEDEAKNLLKSDSMNRQVGERLAASYANFLITNNSIVFPTFGEKTDEQAKEILQKAFPEHKVIGVYARNILLGGGNIHCITQQVPEKCSIKVV.

The active-site Amidino-cysteine intermediate is the cysteine 355.

Belongs to the agmatine deiminase family.

It carries out the reaction agmatine + H2O = N-carbamoylputrescine + NH4(+). The polypeptide is Putative agmatine deiminase (Marinomonas sp. (strain MWYL1)).